The primary structure comprises 29 residues: Toxin TdII-3 (29 aa).

The region spanning Lys1 to Leu29 is the LCN-type CS-alpha/beta domain.

It belongs to the long (4 C-C) scorpion toxin superfamily. Sodium channel inhibitor family. Beta subfamily. Expressed by the venom gland.

It is found in the secreted. Its function is as follows. Binds voltage-independently to sodium channels (Nav) and shifts the voltage of activation toward more negative potentials. This toxin is active against mammals and also affects neuromuscular preparations of frog. In Tityus discrepans (Venezuelan scorpion), this protein is Toxin TdII-3.